The primary structure comprises 481 residues: Endonuclease Bax1 (481 aa).

The N-terminal domain (NTD) stretch occupies residues 1–136 (MLPWELARFS…EKKIIKAPTI (136 aa)). The segment at 158–250 (YKLTVYVSSN…LKLANFKELK (93 aa)) is central domain (CRD). The nuclease domain (NUS) stretch occupies residues 260-364 (DSSVEEKFYK…YKRKIDISLV (105 aa)). The a divalent metal cation site is built by Glu265, Asp297, and Glu310. The tract at residues 414–481 (PGYIFLKNYY…AIVIKDKKVN (68 aa)) is C-terminal domain (CTD).

The protein belongs to the Bax1 family. In terms of assembly, homodimer in solution, forms a heterodimer with XPB2. Requires a divalent metal cation as cofactor.

Functionally, a dual DNA endonuclease probably involved in nucleotide excision repair (NER). The N-terminal nuclease domain (NTD) of the XPB2-Bax1 complex cleaves on one side of a DNA bubble (which presumably mimics DNA damage), while the NUS nuclease domain cleaves the other side, respectively called 5' and 3' nuclease activities. Interaction with XPB blocks the NTD nuclease activity. Binds to and stimulates the ATPase activity (and probably also helicase activity) of XPB2. Increases affinity of XPB2 for forked DNA. Does not stimulate the DNA-dependent activity of XPB1. In an XPB2-Bax1-bubble DNA crystal (12 bp of dsDNA, a 6 base bubble and 6 bp of dsDNA) the short 6 bp arm is unwound. The 2 helicase and the ThM domains of XPB2 with the NTD and CRD domains of Bax1 encircle the DNA, forming a tunnel where the 12 bp dsDNA and the ds-ssDNA junction are located. The ThM domain is wedged between the ssDNA tails, with the 5' ssDNA contacting Bax1 and the 3' ssDNA in a channel in XPB2. The nuclease domain (NUS) of Bax1 does not contact DNA in the bubble DNA complex. This is Endonuclease Bax1 from Sulfurisphaera tokodaii (strain DSM 16993 / JCM 10545 / NBRC 100140 / 7) (Sulfolobus tokodaii).